Reading from the N-terminus, the 187-residue chain is Protein TIFY 11b (187 aa).

Residues Ala-68–Ser-103 form the Tify domain. A Jas motif is present at residues Pro-121–Tyr-145. A Nuclear localization signal motif is present at residues Met-123 to Arg-130. Residues Leu-139–Leu-168 form a disordered region. Positions Lys-154–Thr-163 are enriched in basic and acidic residues.

It belongs to the TIFY/JAZ family. In terms of assembly, interacts with COI1B in a coronatine-dependent manner. Coronatine is an analog of jasmonoyl isoleucine (JA-Ile). In terms of processing, ubiquitinated. Targeted for degradation by the SCF(COI1) E3 ubiquitin ligase-proteasome pathway during jasmonate signaling.

It is found in the nucleus. Its function is as follows. Repressor of jasmonate responses. The chain is Protein TIFY 11b from Oryza sativa subsp. japonica (Rice).